Here is a 261-residue protein sequence, read N- to C-terminus: Enolase-phosphatase E1 (261 aa).

Mg(2+)-binding residues include Asp-16 and Glu-18. Residues 153–154 (SS) and Lys-187 each bind substrate. Residue Asp-212 coordinates Mg(2+).

The protein belongs to the HAD-like hydrolase superfamily. MasA/MtnC family. Monomer. Requires Mg(2+) as cofactor.

It is found in the cytoplasm. The protein localises to the nucleus. The catalysed reaction is 5-methylsulfanyl-2,3-dioxopentyl phosphate + H2O = 1,2-dihydroxy-5-(methylsulfanyl)pent-1-en-3-one + phosphate. Its pathway is amino-acid biosynthesis; L-methionine biosynthesis via salvage pathway; L-methionine from S-methyl-5-thio-alpha-D-ribose 1-phosphate: step 3/6. It functions in the pathway amino-acid biosynthesis; L-methionine biosynthesis via salvage pathway; L-methionine from S-methyl-5-thio-alpha-D-ribose 1-phosphate: step 4/6. In terms of biological role, bifunctional enzyme that catalyzes the enolization of 2,3-diketo-5-methylthiopentyl-1-phosphate (DK-MTP-1-P) into the intermediate 2-hydroxy-3-keto-5-methylthiopentenyl-1-phosphate (HK-MTPenyl-1-P), which is then dephosphorylated to form the acireductone 1,2-dihydroxy-3-keto-5-methylthiopentene (DHK-MTPene). The chain is Enolase-phosphatase E1 from Homo sapiens (Human).